Consider the following 194-residue polypeptide: Isopentenyl-diphosphate Delta-isomerase (194 aa).

Residues His35 and His42 each contribute to the Mn(2+) site. The region spanning 40–174 (PLHLAFSSYL…PWALSPWSVD (135 aa)) is the Nudix hydrolase domain. Residue Cys77 is part of the active site. Residue His79 participates in Mn(2+) binding. Glu97 contacts Mg(2+). Glu124 and Glu126 together coordinate Mn(2+). Glu126 is a catalytic residue.

The protein belongs to the IPP isomerase type 1 family. The cofactor is Mg(2+). Requires Mn(2+) as cofactor.

It localises to the cytoplasm. The catalysed reaction is isopentenyl diphosphate = dimethylallyl diphosphate. It participates in isoprenoid biosynthesis; dimethylallyl diphosphate biosynthesis; dimethylallyl diphosphate from isopentenyl diphosphate: step 1/1. In terms of biological role, catalyzes the 1,3-allylic rearrangement of the homoallylic substrate isopentenyl (IPP) to its highly electrophilic allylic isomer, dimethylallyl diphosphate (DMAPP). This chain is Isopentenyl-diphosphate Delta-isomerase, found in Frankia alni (strain DSM 45986 / CECT 9034 / ACN14a).